We begin with the raw amino-acid sequence, 180 residues long: Probable RNA 2'-phosphotransferase (180 aa).

This sequence belongs to the KptA/TPT1 family.

Its function is as follows. Removes the 2'-phosphate from RNA via an intermediate in which the phosphate is ADP-ribosylated by NAD followed by a presumed transesterification to release the RNA and generate ADP-ribose 1''-2''-cyclic phosphate (APPR&gt;P). May function as an ADP-ribosylase. The protein is Probable RNA 2'-phosphotransferase of Thermococcus kodakarensis (strain ATCC BAA-918 / JCM 12380 / KOD1) (Pyrococcus kodakaraensis (strain KOD1)).